Here is a 753-residue protein sequence, read N- to C-terminus: Nigerose phosphorylase (753 aa).

348–349 provides a ligand contact to substrate; the sequence is WD. Glu-490 functions as the Proton donor in the catalytic mechanism. 604–605 is a binding site for substrate; sequence KQ.

Belongs to the glycosyl hydrolase 65 family. As to quaternary structure, homodimer.

It is found in the cytoplasm. It catalyses the reaction nigerose + phosphate = beta-D-glucose 1-phosphate + D-glucose. Does not require divalent metal ions. Its function is as follows. Catalyzes the reversible phosphorolysis of nigerose. Also shows a weak activity on kojibiose. This chain is Nigerose phosphorylase, found in Lachnoclostridium phytofermentans (strain ATCC 700394 / DSM 18823 / ISDg) (Clostridium phytofermentans).